The following is a 104-amino-acid chain: MSYAIFKHGGKQYKVVEGDIVLLDKMNKEPKALVELVEVLAVSKEGKLSCGKPFVNGAKIEAEVINEGRSKKVITFKKRRRKDSKTKRGFRRDFTRVRITKIVA.

The protein belongs to the bacterial ribosomal protein bL21 family. In terms of assembly, part of the 50S ribosomal subunit. Contacts protein L20.

Its function is as follows. This protein binds to 23S rRNA in the presence of protein L20. The sequence is that of Large ribosomal subunit protein bL21 from Helicobacter pylori (strain J99 / ATCC 700824) (Campylobacter pylori J99).